The chain runs to 566 residues: Deformed epidermal autoregulatory factor 1 homolog (566 aa).

Disordered regions lie at residues alanine 33–arginine 62 and glycine 163–threonine 191. Residues proline 170–leucine 182 are compositionally biased toward pro residues. The residue at position 172 (threonine 172) is a Phosphothreonine. The residue at position 177 (serine 177) is a Phosphoserine. Phosphothreonine is present on threonine 180. The SAND domain maps to asparagine 194 to asparagine 274. The Nuclear localization signal motif lies at proline 300 to lysine 306. The segment at isoleucine 404–lysine 479 is interaction with LMO4. Phosphothreonine is present on threonine 433. A phosphoserine mark is found at serine 444 and serine 449. Residues cysteine 505, cysteine 508, cysteine 516, cysteine 519, cysteine 525, cysteine 529, histidine 537, and cysteine 541 each contribute to the Zn(2+) site. Residues cysteine 505–cysteine 541 form an MYND-type zinc finger.

In terms of assembly, homodimer. Isoform 1 and isoform 2 may form a heterodimer. May interact with the corepressors NCOR1 and NCRO2. Identified in a complex with XRCC5 and XRCC6. Interacts (via the SAND domain) with the DNA-PK complex subunit XRCC6; the interaction is direct with XRCC6 and may be inhibited by DNA-binding. Interacts with LMO4; LMO4 blocks export from nucleus. Interacts with LMO2 and CLIM2. In terms of processing, may be phosphorylated by DNA-PK complex in a DNA independent manner (in vitro). Ubiquitously expressed during embryogenesis, with higher expression in regions of the central nervous system, dorsal root ganglia, submandibular gland, epidermis and breast. In 12-week-old NOD mice, expression of isoform 2 is sevenfold higher in lymph node stromal elements than in T-cells and tenfold higher than in B-cells.

Its subcellular location is the nucleus. The protein localises to the cytoplasm. Its function is as follows. Transcription factor that binds to sequence with multiple copies of 5'-TTC[CG]G-3' present in its own promoter and that of the HNRPA2B1 gene. Down-regulates transcription of these genes. Binds to the retinoic acid response element (RARE) 5'-AGGGTTCACCGAAAGTTCA-3'. Activates the proenkephalin gene independently of promoter binding, probably through protein-protein interaction. Regulates epithelial cell proliferation and side-branching in the mammary gland. Required for neural tube closure and skeletal patterning. Controls the expression of peripheral tissue antigens in pancreatic lymph nodes. Isoform 1 displays greater transcriptional activity than isoform 2. Isoform 2 may inhibit transcriptional activity of isoform 1 by interacting with it and retaining it in the cytoplasm. Transcriptional activator of EIF4G3. May also involved in behavior. In Mus musculus (Mouse), this protein is Deformed epidermal autoregulatory factor 1 homolog (Deaf1).